We begin with the raw amino-acid sequence, 508 residues long: MGCCCSSDYDEDWIENIDICEHCNYPIDPDSKRQQLIRNVSEVRDPLVSYEAMSPPCSPLQDKLVVALYDYEPTHDGDLGLKQGEKLRVLEESGEWWRAQSLTTGQEGLIPHNFVAMVNSLEPEPWFFKNLSRKNAEARLLASGNTHGSFLIRESETSKGSYSLSVRDFDQNQGETVKHYKIRNMDNGGYYISPRVTFSSLHELVEYYSSSSDGLCTRLGKPCRTQKPQKPWWQDEWEVPRESLKLVEKLGAGQFGEVWMGFYNGHTKVAIKNLKQGSMSPSAFLAEANLMKNLQHPRLVRLYAVVTKEPIYIITEYMEKGSLVDFLKTSEGIKLSINKLLDMAAQIAEGMAFIEAKNYIHRDLRAANILVSEALCCKIADFGLARLIEDNEYTAREGAKFPIKWTAPEAINYGTFTIKSDVWSFGILLTEIVTYGRIPYPGMTNPEVIQNLERGYRMPQPDNCPQELYELMMQCWKEQPEERPTFEYMKSVLEDFFTATEGQYQQQP.

The N-myristoyl glycine moiety is linked to residue glycine 2. 2 S-palmitoyl cysteine lipidation sites follow: cysteine 3 and cysteine 5. The SH3 domain occupies 60–120 (LQDKLVVALY…PHNFVAMVNS (61 aa)). The SH2 domain occupies 126 to 223 (WFFKNLSRKN…GLCTRLGKPC (98 aa)). The 254-residue stretch at 244–497 (LKLVEKLGAG…YMKSVLEDFF (254 aa)) folds into the Protein kinase domain. ATP contacts are provided by residues 250–258 (LGAGQFGEV) and lysine 272. Catalysis depends on aspartate 363, which acts as the Proton acceptor. Residue tyrosine 393 is modified to Phosphotyrosine; by autocatalysis. Position 504 is a phosphotyrosine (tyrosine 504).

Belongs to the protein kinase superfamily. Tyr protein kinase family. SRC subfamily. Binds to the cytoplasmic domain of cell surface receptors, such as CD4, CD8. In terms of processing, phosphorylated on Tyr-393, which increases enzymatic activity, this site is dephosphorylated by PTN22. Phosphorylated on Tyr-504, presumably by CSK, which decreases activity. Dephosphorylated by PTPRC/CD45. Dephosphorylation at Tyr-393 by PTPN2 negatively regulates T-cells differentiation. Post-translationally, palmitoylation regulates association with the plasma membrane.

It is found in the cell membrane. Its subcellular location is the cytoplasm. It localises to the cytosol. It catalyses the reaction L-tyrosyl-[protein] + ATP = O-phospho-L-tyrosyl-[protein] + ADP + H(+). Inhibited by tyrosine phosphorylation. Its function is as follows. Tyrosine kinase that plays an essential role for the selection and maturation of developing T-cell in the thymus and in mature T-cell function. Is constitutively associated with the cytoplasmic portions of the CD4 and CD8 surface receptors and plays a key role in T-cell antigen receptor(TCR)-linked signal transduction pathways. In Gallus gallus (Chicken), this protein is Proto-oncogene tyrosine-protein kinase LCK (LCK).